The primary structure comprises 414 residues: MHYCVLSAFLLLHLVTVALSLSTCSTLDMDQFMRKRIEAIRGQILSKLKLTSPPEDYPEPEEVPPEVISIYNSTRDLLQEKASRRAAACERERSDEEYYAKEVYKIDMPSFLPSENAIPPTFYRPYFRIVRFDVSSMEKNASNLVKAEFRVFRLQNPKARVPEQRIELYQILKSKDLTSPTQRYIDSKVVKTRAEGEWLSFDVTDAVHEWLHHKDRNLGFKISLHCPCCTFVPSNNYIIPNKSEELEARFAGIDGTSTYTSGDQKTIKSTRKKNSGKSPHLLLMLLPSYRLESQQSNRRKKRALDAAYCFRNVQDNCCLRPLYIDFKRDLGWKWIHEPKGYNANFCAGACPYLWSSDTQHSRVLSLYNTINPEASASPCCVSQDLEPLTILYYIGKTPKIEQLSNMIVKSCKCS.

The N-terminal stretch at 1-20 (MHYCVLSAFLLLHLVTVALS) is a signal peptide. Asn72, Asn140, and Asn241 each carry an N-linked (GlcNAc...) asparagine glycan. Disulfide bonds link Cys309–Cys318, Cys317–Cys380, Cys346–Cys411, and Cys350–Cys413.

It belongs to the TGF-beta family. In terms of assembly, interacts with the serine proteases, HTRA1 and HTRA3. Interacts with ASPN. Interacts with MFAP5. As to quaternary structure, interacts with Transforming growth factor beta-2 (TGF-beta-2) chain; interaction is non-covalent and maintains (TGF-beta-2) in a latent state. Interacts with LRRC32/GARP; leading to regulate activation of TGF-beta-2. Interacts with NREP; the interaction results in a decrease in TGFB2 autoinduction. Transforming growth factor beta-2: Homodimer; disulfide-linked. Transforming growth factor beta-2: Interacts with TGF-beta receptors (TGFBR1 and TGFBR2), leading to signal transduction. Post-translationally, the precursor proprotein is cleaved in the Golgi apparatus to form Transforming growth factor beta-2 (TGF-beta-2) and Latency-associated peptide (LAP) chains, which remain non-covalently linked, rendering TGF-beta-2 inactive.

The protein localises to the secreted. Its subcellular location is the extracellular space. The protein resides in the extracellular matrix. Its function is as follows. Precursor of the Latency-associated peptide (LAP) and Transforming growth factor beta-2 (TGF-beta-2) chains, which constitute the regulatory and active subunit of TGF-beta-2, respectively. In terms of biological role, required to maintain the Transforming growth factor beta-2 (TGF-beta-2) chain in a latent state during storage in extracellular matrix. Associates non-covalently with TGF-beta-2 and regulates its activation via interaction with 'milieu molecules', such as LTBP1 and LRRC32/GARP, that control activation of TGF-beta-2. Multifunctional protein that regulates various processes such as angiogenesis and heart development. Activation into mature form follows different steps: following cleavage of the proprotein in the Golgi apparatus, Latency-associated peptide (LAP) and Transforming growth factor beta-2 (TGF-beta-2) chains remain non-covalently linked rendering TGF-beta-2 inactive during storage in extracellular matrix. At the same time, LAP chain interacts with 'milieu molecules', such as LTBP1 and LRRC32/GARP, that control activation of TGF-beta-2 and maintain it in a latent state during storage in extracellular milieus. Once activated following release of LAP, TGF-beta-2 acts by binding to TGF-beta receptors (TGFBR1 and TGFBR2), which transduce signal. The protein is Transforming growth factor beta-2 proprotein (TGFB2) of Bos taurus (Bovine).